We begin with the raw amino-acid sequence, 102 residues long: Keratinocyte differentiation-associated protein (102 aa).

The signal sequence occupies residues 1 to 22 (MKIPILPVVALLSLLALHAVQG).

Expression restricted to suprabasal keratinocytes of the epidermis.

It localises to the secreted. Functionally, may act as a soluble regulator of keratinocyte differentiation. May play an important role in embryonic skin morphogenesis. The polypeptide is Keratinocyte differentiation-associated protein (Mus musculus (Mouse)).